The chain runs to 592 residues: A-type ATP synthase subunit A (592 aa).

Residue 233–240 (GPFGSGKT) participates in ATP binding.

This sequence belongs to the ATPase alpha/beta chains family. In terms of assembly, has multiple subunits with at least A(3), B(3), C, D, E, F, H, I and proteolipid K(x).

The protein resides in the cell membrane. It carries out the reaction ATP + H2O + 4 H(+)(in) = ADP + phosphate + 5 H(+)(out). Functionally, component of the A-type ATP synthase that produces ATP from ADP in the presence of a proton gradient across the membrane. The A chain is the catalytic subunit. In Saccharolobus solfataricus (strain ATCC 35092 / DSM 1617 / JCM 11322 / P2) (Sulfolobus solfataricus), this protein is A-type ATP synthase subunit A.